Here is a 956-residue protein sequence, read N- to C-terminus: Outer capsid protein VP2 (956 aa).

It belongs to the orbivirus VP2 family.

It localises to the virion. In terms of biological role, the VP2 protein is one of the two proteins (with VP5) which constitute the virus particle outer capsid. It is the major target of the host immunogenic response. Responsible for viral attachment to target host cell, probably by binding to sialic acid. This attachment induces virion internalization predominantly through clathrin-dependent endocytosis. This is Outer capsid protein VP2 (Segment-2) from Bluetongue virus 11 (isolate USA) (BTV 11).